We begin with the raw amino-acid sequence, 415 residues long: Squalene synthase 12 (415 aa).

The next 2 helical transmembrane spans lie at 281–301 and 391–411; these read AIFR…ALCF and LIAI…SNLL.

It belongs to the phytoene/squalene synthase family. Requires Mg(2+) as cofactor. It depends on Mn(2+) as a cofactor.

It is found in the endoplasmic reticulum membrane. The enzyme catalyses 2 (2E,6E)-farnesyl diphosphate + NADH + H(+) = squalene + 2 diphosphate + NAD(+). It carries out the reaction 2 (2E,6E)-farnesyl diphosphate + NADPH + H(+) = squalene + 2 diphosphate + NADP(+). It participates in terpene metabolism; lanosterol biosynthesis; lanosterol from farnesyl diphosphate: step 1/3. Functionally, component of the triterpene saponins (e.g. ginsenosides or panaxosides) and phytosterols biosynthetic pathways. Catalyzes the biosynthesis of squalene. The sequence is that of Squalene synthase 12 from Panax ginseng (Korean ginseng).